Reading from the N-terminus, the 389-residue chain is MLLALAQWLQGDASFLRLFTYLTFRAVMATITALGIGLVCGPWVIRKLTQMKVGQAVRKDGPQTHLVKSGTPTMGGVLILIGIAVATLLWGDLTNRFIWIVMLVTFGFGVIGWVDDYRKVVHKDPRGMSSREKYFWQSVIGLFAAVYLAFSVSEANNVRVFDLFMAWVRSGLSMGLPARADLMLPFLKSISYPLGVWGFIVLTYFVIVGASNAVNLTDGLDGLVIMPVVLVGASLGVFAYVMGSAVYSKYLLFPHIPGAGELLIFCSAMGGAGLAFLWYNTHPAQVFMGDVGALALGGALGTVAVIVRQEIVLFIMGGIFVAETLSVMLQVSWFKYTKKRYGEGRRLLKMAPLHHHFELSGWKETQVVVRFWIITLMLCLFGLTTLKLR.

10 consecutive transmembrane segments (helical) span residues 25–45 (RAVM…PWVI), 73–93 (TMGG…WGDL), 97–117 (FIWI…VDDY), 135–155 (FWQS…VSEA), 190–210 (ISYP…IVGA), 222–242 (GLVI…AYVM), 258–278 (GAGE…AFLW), 286–306 (VFMG…VAVI), 311–331 (IVLF…MLQV), and 366–386 (QVVV…LTTL).

The protein belongs to the glycosyltransferase 4 family. MraY subfamily. Mg(2+) serves as cofactor.

It is found in the cell inner membrane. The enzyme catalyses UDP-N-acetyl-alpha-D-muramoyl-L-alanyl-gamma-D-glutamyl-meso-2,6-diaminopimeloyl-D-alanyl-D-alanine + di-trans,octa-cis-undecaprenyl phosphate = di-trans,octa-cis-undecaprenyl diphospho-N-acetyl-alpha-D-muramoyl-L-alanyl-D-glutamyl-meso-2,6-diaminopimeloyl-D-alanyl-D-alanine + UMP. It functions in the pathway cell wall biogenesis; peptidoglycan biosynthesis. Functionally, catalyzes the initial step of the lipid cycle reactions in the biosynthesis of the cell wall peptidoglycan: transfers peptidoglycan precursor phospho-MurNAc-pentapeptide from UDP-MurNAc-pentapeptide onto the lipid carrier undecaprenyl phosphate, yielding undecaprenyl-pyrophosphoryl-MurNAc-pentapeptide, known as lipid I. The polypeptide is Phospho-N-acetylmuramoyl-pentapeptide-transferase (Burkholderia cenocepacia (strain HI2424)).